The primary structure comprises 198 residues: Holliday junction branch migration complex subunit RuvA (198 aa).

The interval 1 to 61 (MILYRIGEII…EYQYATYAFK (61 aa)) is domain I. Positions 62 to 139 (DFKERLLFVD…KMISPKDAAK (78 aa)) are domain II. Residues 140–144 (INETT) form a flexible linker region. Positions 144-198 (TNTLSEVKETLKMVGFKTKQIDGALSKISSTDDVEKMIEEAIKLMSTQNYESATA) are domain III.

Belongs to the RuvA family. As to quaternary structure, homotetramer. Forms an RuvA(8)-RuvB(12)-Holliday junction (HJ) complex. HJ DNA is sandwiched between 2 RuvA tetramers; dsDNA enters through RuvA and exits via RuvB. An RuvB hexamer assembles on each DNA strand where it exits the tetramer. Each RuvB hexamer is contacted by two RuvA subunits (via domain III) on 2 adjacent RuvB subunits; this complex drives branch migration. In the full resolvosome a probable DNA-RuvA(4)-RuvB(12)-RuvC(2) complex forms which resolves the HJ.

Its subcellular location is the cytoplasm. In terms of biological role, the RuvA-RuvB-RuvC complex processes Holliday junction (HJ) DNA during genetic recombination and DNA repair, while the RuvA-RuvB complex plays an important role in the rescue of blocked DNA replication forks via replication fork reversal (RFR). RuvA specifically binds to HJ cruciform DNA, conferring on it an open structure. The RuvB hexamer acts as an ATP-dependent pump, pulling dsDNA into and through the RuvAB complex. HJ branch migration allows RuvC to scan DNA until it finds its consensus sequence, where it cleaves and resolves the cruciform DNA. This is Holliday junction branch migration complex subunit RuvA from Mycoplasmopsis agalactiae (strain NCTC 10123 / CIP 59.7 / PG2) (Mycoplasma agalactiae).